Reading from the N-terminus, the 518-residue chain is Allene oxide synthase, chloroplastic (518 aa).

The transit peptide at 1–33 directs the protein to the chloroplast; sequence MASISTPFPISLHPKTVRSKPLKFRVLTRPIKA. Residues Lys-133, His-164, and Lys-168 each coordinate heme b. Residues Asn-321 and Thr-389 each contribute to the (13S)-hydroperoxy-(9Z,11E)-octadecadienoate site. Positions 321 and 389 each coordinate (13S)-hydroperoxy-(9Z,11E,15Z)-octadecatrienoate. 2 residues coordinate heme b: Lys-469 and Cys-471.

This sequence belongs to the cytochrome P450 family. Heme b is required as a cofactor.

The protein localises to the plastid. Its subcellular location is the chloroplast. It is found in the plastoglobule. The catalysed reaction is (13S)-hydroperoxy-(9Z,11E,15Z)-octadecatrienoate = (9Z,13S,15Z)-12,13-epoxyoctadeca-9,11,15-trienoate + H2O. The enzyme catalyses (13S)-hydroperoxy-(9Z,11E)-octadecadienoate = (9Z,13S)-12,13-epoxyoctadeca-9,11-dienoate + H2O. Its pathway is lipid metabolism; oxylipin biosynthesis. Functionally, cytochrome P450 enzyme involved in the biosynthesis of oxylipin jasmonates, important phytohormones acting as growth regulators and signaling molecules for plant defense. Functions as an allene oxide synthase that converts hydroperoxy fatty acids to unstable allene epoxides. Catalyzes the dehydration of 13-HPOTE ((13S)-hydroperoxy-(9Z,11E,15Z)-octadecatrienoate), as well as 13-HPODE ((13S)-hydroperoxy-(9Z,11E)-octadecadienoate). The sequence is that of Allene oxide synthase, chloroplastic (CYP74A) from Arabidopsis thaliana (Mouse-ear cress).